We begin with the raw amino-acid sequence, 145 residues long: Probable 4-amino-4-deoxy-L-arabinose-phosphoundecaprenol flippase subunit ArnF (145 aa).

The Cytoplasmic portion of the chain corresponds to 1-3; the sequence is MAH. Residues 4–24 traverse the membrane as a helical segment; the sequence is LTLSIRGLLLALMSVLLISVA. Residues 25–61 lie on the Periplasmic side of the membrane; it reads QLSMKWGMGTLNQLWSDLVMLWQGEDYSSLFSQALAP. The chain crosses the membrane as a helical span at residues 62 to 82; the sequence is VMAVGAGLFCYALSMACWVMA. Topologically, residues 83 to 89 are cytoplasmic; it reads LKRLPLS. A helical transmembrane segment spans residues 90 to 110; it reads IAYPLLSLSYVLVYLGAVYLP. The Periplasmic portion of the chain corresponds to 111–114; sequence WLNE. Residues 115 to 135 form a helical membrane-spanning segment; sequence PLSWVKGTGIFLILLGLIFVL. The Cytoplasmic portion of the chain corresponds to 136-145; that stretch reads PKKNQTSDKS.

Belongs to the ArnF family. As to quaternary structure, heterodimer of ArnE and ArnF.

The protein localises to the cell inner membrane. It functions in the pathway bacterial outer membrane biogenesis; lipopolysaccharide biosynthesis. Translocates 4-amino-4-deoxy-L-arabinose-phosphoundecaprenol (alpha-L-Ara4N-phosphoundecaprenol) from the cytoplasmic to the periplasmic side of the inner membrane. The chain is Probable 4-amino-4-deoxy-L-arabinose-phosphoundecaprenol flippase subunit ArnF from Shewanella sediminis (strain HAW-EB3).